The following is a 224-amino-acid chain: MQHPAFYVTGTDTGIGKTMGSTALLHALRARGHRAVGMKPVASGCEHTPQGWRNEDALALQAASDPQPDYATLNPYALPAPLAPELAAADVGVTLALEPIAHAFAQLLTQAEVVVVEGVGGWAAPLSATLDQADLVRALQLPVVLVVGVRLGCINHARLTAAAIAADGLQCIGWIANEIDPQMERIEENIGMLRQRLAMPCWGRIPWRPGADAAAQAHGLQLPR.

Thr18 is a Mg(2+) binding site. Lys39 is an active-site residue. Residue Ser43 participates in substrate binding. Mg(2+) is bound by residues Asp56 and Glu117. Residues Asp56, 117 to 120 (EGVG), and 177 to 178 (NE) each bind ATP.

It belongs to the dethiobiotin synthetase family. Homodimer. It depends on Mg(2+) as a cofactor.

The protein localises to the cytoplasm. It carries out the reaction (7R,8S)-7,8-diammoniononanoate + CO2 + ATP = (4R,5S)-dethiobiotin + ADP + phosphate + 3 H(+). Its pathway is cofactor biosynthesis; biotin biosynthesis; biotin from 7,8-diaminononanoate: step 1/2. Its function is as follows. Catalyzes a mechanistically unusual reaction, the ATP-dependent insertion of CO2 between the N7 and N8 nitrogen atoms of 7,8-diaminopelargonic acid (DAPA, also called 7,8-diammoniononanoate) to form a ureido ring. The polypeptide is ATP-dependent dethiobiotin synthetase BioD (Xanthomonas euvesicatoria pv. vesicatoria (strain 85-10) (Xanthomonas campestris pv. vesicatoria)).